A 2320-amino-acid polypeptide reads, in one-letter code: Sperm-associated antigen 17 (2320 aa).

2 stretches are compositionally biased toward basic and acidic residues: residues Asp-139 to Val-171 and Arg-199 to Ile-210. Disordered stretches follow at residues Asp-139–Asp-211, Ile-388–Tyr-407, Ala-682–Gln-739, Ser-894–Lys-928, Glu-950–Leu-1001, Lys-1084–Lys-1118, Gln-1191–Asn-1221, Ser-1334–Thr-1367, Asp-1393–Pro-1416, Lys-1983–Val-2028, and Thr-2080–Asp-2101. Residues Val-703 to Gln-720 show a composition bias toward polar residues. A coiled-coil region spans residues Glu-865 to Asp-965. Basic and acidic residues-rich tracts occupy residues Glu-914 to Lys-928 and Glu-950 to Lys-999. The span at Asn-1090–Glu-1103 shows a compositional bias: acidic residues. 2 stretches are compositionally biased toward basic and acidic residues: residues Val-1104–Lys-1118 and Lys-1203–Asn-1221. Composition is skewed to polar residues over residues Val-2012–Val-2028 and Glu-2082–Arg-2094.

In terms of assembly, interacts (via the C-terminus) with SPAG6; the interaction probably occurs on polymerized microtubules. As to expression, highly expressed in testis, round spermatids, testicular sperm, epididymal sperm and in condensing spermatids (at protein level). Expressed in organs that contain cilia-bearing cells including brain, oviduct, lung, and uterus. Expressed in articular cartilage and bone.

Its subcellular location is the cytoplasm. The protein resides in the cytoskeleton. It is found in the flagellum axoneme. The protein localises to the cytoplasmic vesicle. It localises to the secretory vesicle. Its subcellular location is the acrosome. The protein resides in the golgi apparatus. In terms of biological role, component of the central pair apparatus of ciliary axonemes. Plays a critical role in the function and structure of motile cilia. May play a role in endochondral bone formation, most likely because of a function in primary cilia of chondrocytes and osteoblasts. Essential for normal spermatogenesis and male fertility. Required for normal manchette structure, transport of proteins along the manchette microtubules and formation of the sperm head and flagellum. Essential for sperm flagellum development and proper assembly of the respiratory motile cilia central pair apparatus, but not the brain ependymal cilia. This Mus musculus (Mouse) protein is Sperm-associated antigen 17 (Spag17).